The primary structure comprises 235 residues: SMN complex subunit yip11/gem2 (235 aa).

The interval 1–34 (MPSKRKRNPLQYQTSGSLDEETNQRSAFPQIDNN) is disordered. Positions 24–34 (QRSAFPQIDNN) are enriched in polar residues. Phosphoserine is present on residues Ser117 and Ser118.

Belongs to the gemin-2 family. As to quaternary structure, part of the core SMN complex at least composed of smn1, yip11/gem2, gem6, gem7 and gem8. Interacts with smn1; the interaction is direct.

The protein resides in the nucleus. Its function is as follows. The SMN complex catalyzes the assembly of small nuclear ribonucleoproteins (snRNPs), the building blocks of the spliceosome, and thereby plays an important role in the splicing of cellular pre-mRNAs. Most spliceosomal snRNPs contain a common set of Sm proteins smb1, smd1, smd2, smd3, sme1, smf1 and smg1 that assemble in a heptameric protein ring on the Sm site of the small nuclear RNA to form the core snRNP. In the cytosol, the Sm proteins smd1, smd2, sme1, smf1 and smg1 (5Sm) are trapped in an inactive 6S pICln-Sm complex by the chaperone saf5. To complete assembly of core snRNPs, the SMN complex accepts 5Sm from saf5. Binding of snRNA inside 5Sm ultimately triggers eviction of the SMN complex, thereby allowing binding of smd3 and smb1 to complete assembly of the core snRNP. Within the SMN complex, yip11/gem2 constrains the conformation of 5Sm, thereby promoting 5Sm binding to snRNA containing the snRNP code (a nonameric Sm site and a 3'-adjacent stem-loop), thus preventing progression of assembly until a cognate substrate is bound. This is SMN complex subunit yip11/gem2 (yip11) from Schizosaccharomyces pombe (strain 972 / ATCC 24843) (Fission yeast).